The chain runs to 417 residues: 2-oxoglutarate and iron-dependent oxygenase JMJD4 (417 aa).

A JmjC domain is found at 142-301 (CRDFPVEDVF…NMWRFLQQEL (160 aa)). The Fe cation site is built by H189, D191, and H269.

The protein belongs to the JMJD6 family. In terms of assembly, interacts with ETF1. Interacts with the ETF1-GSPT1 complex. Requires Fe(2+) as cofactor.

The protein localises to the cytoplasm. It catalyses the reaction L-lysyl-[protein] + 2-oxoglutarate + O2 = 4-hydroxy-L-lysyl-[protein] + succinate + CO2. Its function is as follows. Catalyzes the 2-oxoglutarate and iron-dependent C4-lysyl hydroxylation of ETF1 at 'Lys-63' thereby promoting the translational termination efficiency of ETF1. The polypeptide is 2-oxoglutarate and iron-dependent oxygenase JMJD4 (JMJD4) (Homo sapiens (Human)).